Reading from the N-terminus, the 141-residue chain is Lutropin subunit beta (141 aa).

An N-terminal signal peptide occupies residues 1-21 (MERYQELTVLLLLLLLEGGSG). Intrachain disulfides connect Cys-30–Cys-78, Cys-44–Cys-93, Cys-47–Cys-131, Cys-55–Cys-109, Cys-59–Cys-111, and Cys-114–Cys-121. A glycan (N-linked (GlcNAc...) asparagine) is linked at Asn-34.

It belongs to the glycoprotein hormones subunit beta family. As to quaternary structure, heterodimer of a common alpha chain and a unique beta chain which confers biological specificity to thyrotropin, lutropin, follitropin and gonadotropin.

The protein resides in the secreted. Promotes spermatogenesis and ovulation by stimulating the testes and ovaries to synthesize steroids. The polypeptide is Lutropin subunit beta (LHB) (Monodelphis domestica (Gray short-tailed opossum)).